The primary structure comprises 255 residues: uncharacterized protein (255 aa).

This is an uncharacterized protein from Acanthamoeba polyphaga mimivirus (APMV).